The chain runs to 453 residues: Homeobox protein meis3 (453 aa).

The tract at residues 33–64 (HHSLSQSAPYGSTGAAHRVPMPPGMGSNDGLK) is disordered. The 84-residue stretch at 102-185 (GGDVCSSDSF…PIDLVIDDRD (84 aa)) folds into the MEIS N-terminal domain. The disordered stretch occupies residues 192–272 (LEDFTGSCTS…RDKKRNKKRG (81 aa)). Residues 197–209 (GSCTSLSDQNNSW) show a composition bias toward polar residues. Over residues 218 to 230 (STHSGTPGPSSGG) the composition is skewed to low complexity. Polar residues predominate over residues 231 to 242 (LASQSGDNSSEQ). A DNA-binding region (homeobox) is located at residues 267 to 329 (RNKKRGIFPK…NARRRIVQPM (63 aa)).

The protein belongs to the TALE/MEIS homeobox family.

It localises to the nucleus. Its function is as follows. A caudalizing protein which is required to pattern the anterior/posterior (A/P) axis during central nervous system (CNS) formation. Inhibits anterior neural expression and acts as a transcriptional activator to induce posterior neural gene expression. Maintains a proper A/P balance required for hindbrain formation by activating the FGF/MAPK pathway, which modulates the planar cell polarity (PCP) pathway. Interacts with retinoid signaling during hindbrain patterning. This Xenopus tropicalis (Western clawed frog) protein is Homeobox protein meis3.